A 132-amino-acid chain; its full sequence is ILYEQPSYRGHQYYLWKGEYPDFQRWMGFNDSIRSCRMSPYHQGQYKMRIYERGDFQGQNMEFFEDCPNTYDRFRFRDIHSCNVFDGNWMFYEEPNYRGRQYYLRPGEYRRYSDWGASSARIGSFRRVHHLV.

The Beta/gamma crystallin 'Greek key' 2 domain occupies 1 to 40; sequence ILYEQPSYRGHQYYLWKGEYPDFQRWMGFNDSIRSCRMSP. The connecting peptide stretch occupies residues 41–45; sequence YHQGQ. Beta/gamma crystallin 'Greek key' domains are found at residues 46–86 and 87–129; these read YKMR…NVFD and GNWM…RRVH.

Belongs to the beta/gamma-crystallin family. In terms of assembly, monomer.

In terms of biological role, crystallins are the dominant structural components of the vertebrate eye lens. This is Gamma-crystallin-5 (cryg5) from Xenopus laevis (African clawed frog).